The following is a 301-amino-acid chain: Protease HtpX (301 aa).

A run of 2 helical transmembrane segments spans residues 4-24 (IGLF…VLFI) and 44-64 (TGLL…SLAM). Histidine 150 is a Zn(2+) binding site. The active site involves glutamate 151. Histidine 154 contributes to the Zn(2+) binding site. Transmembrane regions (helical) follow at residues 165–185 (LIQG…GHFV) and 201–221 (FITS…IVMW). Glutamate 227 is a Zn(2+) binding site.

The protein belongs to the peptidase M48B family. Requires Zn(2+) as cofactor.

The protein resides in the cell inner membrane. The sequence is that of Protease HtpX from Alkalilimnicola ehrlichii (strain ATCC BAA-1101 / DSM 17681 / MLHE-1).